Here is a 516-residue protein sequence, read N- to C-terminus: Acetylcholine receptor subunit alpha-like (516 aa).

The first 21 residues, 1 to 21 (MRSVTKYYLHGVVLFATGCAG), serve as a signal peptide directing secretion. At 22–243 (NPDAKRLYDD…ITMRRKTLFY (222 aa)) the chain is on the extracellular side. Asn-45 and Asn-132 each carry an N-linked (GlcNAc...) asparagine glycan. 2 disulfide bridges follow: Cys-149–Cys-163 and Cys-222–Cys-223. An N-linked (GlcNAc...) asparagine glycan is attached at Asn-233. 3 helical membrane passes run 244–264 (TVNLIIPCMGISFLTVLVFYL), 274–294 (LSISILLSLTVFFLLLAEIIP), and 306–326 (FVLFTMILDTFSICVTVVVLN). Over 327-465 (VHFRSPQTHT…WKYVAMVLDR (139 aa)) the chain is Cytoplasmic. A helical transmembrane segment spans residues 466–486 (PFLWIFTLAVVVGSAGIILQA).

The protein belongs to the ligand-gated ion channel (TC 1.A.9) family. Acetylcholine receptor (TC 1.A.9.1) subfamily.

Its subcellular location is the postsynaptic cell membrane. The protein resides in the cell membrane. Its function is as follows. After binding acetylcholine, the AChR responds by an extensive change in conformation that affects all subunits and leads to opening of an ion-conducting channel across the plasma membrane. The sequence is that of Acetylcholine receptor subunit alpha-like (ARA1) from Manduca sexta (Tobacco hawkmoth).